Reading from the N-terminus, the 404-residue chain is Acetate kinase (404 aa).

Position 9 (Asn9) interacts with Mg(2+). Residue Lys16 participates in ATP binding. Arg100 is a binding site for substrate. Asp157 serves as the catalytic Proton donor/acceptor. ATP contacts are provided by residues 215–219, 290–292, and 335–339; these read HLGNG, DMR, and GIGEN. Glu386 contributes to the Mg(2+) binding site.

This sequence belongs to the acetokinase family. In terms of assembly, homodimer. The cofactor is Mg(2+). Requires Mn(2+) as cofactor.

The protein resides in the cytoplasm. The enzyme catalyses acetate + ATP = acetyl phosphate + ADP. The protein operates within metabolic intermediate biosynthesis; acetyl-CoA biosynthesis; acetyl-CoA from acetate: step 1/2. Functionally, catalyzes the formation of acetyl phosphate from acetate and ATP. Can also catalyze the reverse reaction. This chain is Acetate kinase, found in Methylocella silvestris (strain DSM 15510 / CIP 108128 / LMG 27833 / NCIMB 13906 / BL2).